A 77-amino-acid chain; its full sequence is Secapin (77 aa).

The signal sequence occupies residues 1-32; that stretch reads MKNYSKNATHLITVLLFSFVVILLIIPSKCEA. A propeptide spanning residues 33–52 is cleaved from the precursor; the sequence is VSNDMQPLEARSADLVPEPR. A disulfide bridge connects residues Cys-61 and Cys-72.

This sequence belongs to the secapin family. In terms of tissue distribution, expressed by the venom gland.

It is found in the secreted. Serine protease inhibitor which exhibits antifibrinolytic, antielastolytic and antimicrobial activities. Displays antimicrobial activity against bacteria and fungi. Likely functions in the innate immune response to microbial infection and possibly in the venom, as an antifibrinolytic agent. Not toxic to mice but does induce slight sedation at higher doses (from 40 mg/kg). At a dose of 80 mg/kg, sedation occurs 15 minutes after injection and is accompanied by piloerection and hypothermia. This chain is Secapin, found in Apis mellifera (Honeybee).